Here is a 156-residue protein sequence, read N- to C-terminus: Keratin-associated protein 13-4 (156 aa).

4 consecutive repeat copies span residues 37-46 (CQLGSSLYRN), 47-56 (CQKTCWEPTS), 57-66 (CRKSCYRRRT), and 73-82 (CQTTCSRSLG). Residues 37–82 (CQLGSSLYRNCQKTCWEPTSCRKSCYRRRTSMLCSPCQTTCSRSLG) are 4 X 10 AA approximate repeats.

This sequence belongs to the PMG family. As to quaternary structure, interacts with hair keratins.

Its function is as follows. In the hair cortex, hair keratin intermediate filaments are embedded in an interfilamentous matrix, consisting of hair keratin-associated proteins (KRTAP), which are essential for the formation of a rigid and resistant hair shaft through their extensive disulfide bond cross-linking with abundant cysteine residues of hair keratins. The matrix proteins include the high-sulfur and high-glycine-tyrosine keratins. This is Keratin-associated protein 13-4 (KRTAP13-4) from Macaca fascicularis (Crab-eating macaque).